Consider the following 123-residue polypeptide: Large ribosomal subunit protein uL29 (123 aa).

The protein belongs to the universal ribosomal protein uL29 family. As to quaternary structure, component of the large ribosomal subunit.

The protein resides in the cytoplasm. Its function is as follows. Component of the large ribosomal subunit. The ribosome is a large ribonucleoprotein complex responsible for the synthesis of proteins in the cell. The chain is Large ribosomal subunit protein uL29 (rpl35) from Xenopus tropicalis (Western clawed frog).